The following is a 275-amino-acid chain: MSDEVTYATLMLQDSARVRGNQDGNNLRKEGHPAQSSLWRGAALSLMTLCLVLVTGLVTLATMFLQVSNDINSDSEKLSQLQKSIHPQQDNLSESLNSSRKSLTEESLQSQISALLERQEQMATKLCKEFLIHASDHKCNPCPKTWQWYGNSCYYFSINEEKSWSDSRKDCIDKNATLVKIDSTEERDLLQSQLSLTFSFFWLGLSWNSSGRNWLWEDGSFPPPTLFSDKELASFNGSRDCAYFERGNIYASRCSAEIPWICEKTASLVKTEDLD.

Residues 1 to 41 lie on the Cytoplasmic side of the membrane; that stretch reads MSDEVTYATLMLQDSARVRGNQDGNNLRKEGHPAQSSLWRG. Positions 5–10 match the ITIM motif motif; that stretch reads VTYATL. Tyrosine 7 carries the phosphotyrosine modification. A helical; Signal-anchor for type II membrane protein transmembrane segment spans residues 42-64; that stretch reads AALSLMTLCLVLVTGLVTLATMF. Residues 65–275 are Extracellular-facing; that stretch reads LQVSNDINSD…ASLVKTEDLD (211 aa). N-linked (GlcNAc...) asparagine glycans are attached at residues asparagine 91, asparagine 175, and asparagine 236. Residues 149-263 form the C-type lectin domain; that stretch reads YGNSCYYFSI…CSAEIPWICE (115 aa). Cystine bridges form between cysteine 171/cysteine 262 and cysteine 241/cysteine 254.

As to quaternary structure, homodimer. Interacts (via ITIM motif) with PTPN6. Interacts (via ITIM motif) with PTPN11; this interaction triggers dephosphorylation and activation of PTPN11.

Its subcellular location is the cell membrane. In terms of biological role, inhibitory receptor postulated to negatively regulate immune and non-immune functions. Upon phosphorylation, recruits SH2 domain-containing PTPN6 and PTPN11 phosphatases to its ITIM motif and antagonizes activation signals. Although it inhibits KLRK1/NKG2D-mediated signaling, it does not bind known ligands of KLRK1/NKG2D and therefore is not its inhibitory counterpart. May limit activation of myeloid cell subsets in response to infection or tissue inflammation. May protect target cells against natural killer cell-mediated lysis. May negatively regulate cell cycle and differentiation of melanocytes via inactivation of STAT3. The protein is C-type lectin domain family 12 member B (Clec12b) of Mus musculus (Mouse).